The sequence spans 544 residues: Chaperonin GroEL (544 aa).

ATP is bound by residues 29 to 32 (TLGP), 86 to 90 (DGTTT), Gly413, 476 to 478 (NAL), and Asp492.

This sequence belongs to the chaperonin (HSP60) family. Forms a cylinder of 14 subunits composed of two heptameric rings stacked back-to-back. Interacts with the co-chaperonin GroES.

The protein localises to the cytoplasm. The enzyme catalyses ATP + H2O + a folded polypeptide = ADP + phosphate + an unfolded polypeptide.. Its function is as follows. Together with its co-chaperonin GroES, plays an essential role in assisting protein folding. The GroEL-GroES system forms a nano-cage that allows encapsulation of the non-native substrate proteins and provides a physical environment optimized to promote and accelerate protein folding. This chain is Chaperonin GroEL, found in Desulfitobacterium hafniense (strain Y51).